The sequence spans 246 residues: Probable transcriptional regulatory protein CLK_2466 (246 aa).

The protein belongs to the TACO1 family.

It localises to the cytoplasm. This Clostridium botulinum (strain Loch Maree / Type A3) protein is Probable transcriptional regulatory protein CLK_2466.